The primary structure comprises 353 residues: S-adenosylmethionine:tRNA ribosyltransferase-isomerase (353 aa).

Belongs to the QueA family. In terms of assembly, monomer.

It localises to the cytoplasm. It catalyses the reaction 7-aminomethyl-7-carbaguanosine(34) in tRNA + S-adenosyl-L-methionine = epoxyqueuosine(34) in tRNA + adenine + L-methionine + 2 H(+). Its pathway is tRNA modification; tRNA-queuosine biosynthesis. Transfers and isomerizes the ribose moiety from AdoMet to the 7-aminomethyl group of 7-deazaguanine (preQ1-tRNA) to give epoxyqueuosine (oQ-tRNA). The polypeptide is S-adenosylmethionine:tRNA ribosyltransferase-isomerase (Cupriavidus metallidurans (strain ATCC 43123 / DSM 2839 / NBRC 102507 / CH34) (Ralstonia metallidurans)).